Here is a 392-residue protein sequence, read N- to C-terminus: Tropomodulin (392 aa).

Disordered regions lie at residues 1–30 (MSQA…QLPS), 59–90 (DLNN…GPYK), and 118–138 (QKRG…PENG). A compositionally biased stretch (polar residues) spans 16–29 (SAPSANSQQGTQLP). Basic and acidic residues-rich tracts occupy residues 76 to 90 (RCRD…GPYK) and 122 to 138 (KVYD…PENG).

The protein belongs to the tropomodulin family. Binds to the N-terminus of actin.

The protein resides in the cytoplasm. It localises to the cytoskeleton. In terms of biological role, acts as the pointed end capping protein which maintains the length and dynamics of the actin filament. Blocks the elongation and depolymerization of the actin filaments at the pointed end. This Caenorhabditis elegans protein is Tropomodulin (unc-94).